The following is a 282-amino-acid chain: PAK4-inhibitor INKA1 (282 aa).

Disordered regions lie at residues 21–50 (RDTG…QFRA) and 92–127 (GFSE…FSVS). Inka box stretches follow at residues 163 to 200 (EAED…ELPE) and 256 to 282 (PADI…VSYL).

Belongs to the INKA family. As to quaternary structure, interacts with PAK4. In terms of tissue distribution, expressed in tissues of the developing head during neurulation.

It localises to the nucleus. The protein localises to the cytoplasm. Functionally, inhibitor of the serine/threonine-protein kinase PAK4. Acts by binding PAK4 in a substrate-like manner, inhibiting the protein kinase activity. The sequence is that of PAK4-inhibitor INKA1 from Mus musculus (Mouse).